The chain runs to 252 residues: tRNA (guanine-N(1)-)-methyltransferase (252 aa).

Residues G118 and 138 to 143 each bind S-adenosyl-L-methionine; that span reads IGDYVL.

Belongs to the RNA methyltransferase TrmD family. As to quaternary structure, homodimer.

It localises to the cytoplasm. The catalysed reaction is guanosine(37) in tRNA + S-adenosyl-L-methionine = N(1)-methylguanosine(37) in tRNA + S-adenosyl-L-homocysteine + H(+). Functionally, specifically methylates guanosine-37 in various tRNAs. This Pseudomonas aeruginosa (strain UCBPP-PA14) protein is tRNA (guanine-N(1)-)-methyltransferase.